The sequence spans 429 residues: Eukaryotic translation initiation factor 5 (429 aa).

S10 carries the phosphoserine modification. 27–34 contributes to the GTP binding site; sequence GKGNGIKT. The segment at 143–216 is disordered; it reads KNPPENSDIG…EEAQRRRMDE (74 aa). The segment covering 153-170 has biased composition (basic and acidic residues); the sequence is TGKKEKEKKNRKGKDKEN. The span at 178 to 187 shows a compositional bias: pro residues; sequence TPPPPPPNEI. The span at 194–207 shows a compositional bias: acidic residues; sequence EEEEDDDWGEDTTE. Position 225 is a phosphothreonine (T225). A phosphoserine mark is found at S227, S387, S388, and S408. One can recognise a W2 domain in the interval 231–390; that stretch reads ERTVEERVNI…KEAEEESSGG (160 aa). Residues K411 and K416 each participate in a glycyl lysine isopeptide (Lys-Gly) (interchain with G-Cter in SUMO2) cross-link. At S417 the chain carries Phosphoserine.

This sequence belongs to the eIF-2-beta/eIF-5 family. As to quaternary structure, component of the 43S pre-initiation complex (43S PIC), which is composed of the 40S ribosomal subunit, EIF1, eIF1A (EIF1AX), eIF3 complex, EIF5 and eIF2-GTP-initiator tRNA complex (eIF2 ternary complex). Interacts with eIF1A (EIF1AX) during scanning. Interacts through its C-terminal domain (CTD) with EIF1 or with eIF2-beta (EIF2S2) (mutually exclusive) through a common binding site. Interacts through its C-terminal domain (CTD) with the CTD of EIF5B. Interacts with FMR1 isoform 6; this interaction occurs in a RNA-dependent manner.

It localises to the cytoplasm. Functionally, component of the 43S pre-initiation complex (43S PIC), which binds to the mRNA cap-proximal region, scans mRNA 5'-untranslated region, and locates the initiation codon. In this complex, acts as a GTPase-activating protein, by promoting GTP hydrolysis by eIF2G (EIF2S3). During scanning, interacts with both EIF1 (via its C-terminal domain (CTD)) and EIF1A (via its NTD). This interaction with EIF1A contributes to the maintenance of EIF1 within the open 43S PIC. When start codon is recognized, EIF5, via its NTD, induces eIF2G (EIF2S3) to hydrolyze the GTP. Start codon recognition also induces a conformational change of the PIC to a closed state. This change increases the affinity of EIF5-CTD for EIF2-beta (EIF2S2), which allows the release, by an indirect mechanism, of EIF1 from the PIC. Finally, EIF5 stabilizes the PIC in its closed conformation. The protein is Eukaryotic translation initiation factor 5 (Eif5) of Mus musculus (Mouse).